A 591-amino-acid chain; its full sequence is Aspartate--tRNA ligase (591 aa).

Glu-171 provides a ligand contact to L-aspartate. Residues 195–198 (QLFK) form an aspartate region. Arg-217 contributes to the L-aspartate binding site. ATP is bound by residues 217 to 219 (RDE) and Gln-226. L-aspartate is bound at residue His-448. Glu-482 contacts ATP. Arg-489 contacts L-aspartate. 534–537 (GLDR) provides a ligand contact to ATP.

Belongs to the class-II aminoacyl-tRNA synthetase family. Type 1 subfamily. Homodimer.

It localises to the cytoplasm. It catalyses the reaction tRNA(Asp) + L-aspartate + ATP = L-aspartyl-tRNA(Asp) + AMP + diphosphate. Catalyzes the attachment of L-aspartate to tRNA(Asp) in a two-step reaction: L-aspartate is first activated by ATP to form Asp-AMP and then transferred to the acceptor end of tRNA(Asp). This chain is Aspartate--tRNA ligase, found in Aliivibrio fischeri (strain MJ11) (Vibrio fischeri).